The primary structure comprises 158 residues: PRA1 family protein 2 (158 aa).

4 helical membrane passes run 36–58 (NLNF…TLFT), 62–79 (LLVA…LFFV), 88–108 (FAVL…VIVI), and 113–133 (GLTL…HSAL).

The protein belongs to the PRA1 family.

The protein localises to the membrane. Its function is as follows. May act as a general Rab protein regulator. The protein is PRA1 family protein 2 (prafB) of Dictyostelium discoideum (Social amoeba).